The primary structure comprises 98 residues: Large ribosomal subunit protein eL21 (98 aa).

The interval 1–24 (MVKMSHGPRSGSRRKLTKSAEERK) is disordered.

It belongs to the eukaryotic ribosomal protein eL21 family.

The protein is Large ribosomal subunit protein eL21 (rpl21e) of Thermoplasma acidophilum (strain ATCC 25905 / DSM 1728 / JCM 9062 / NBRC 15155 / AMRC-C165).